The primary structure comprises 339 residues: Tetracenomycin polyketide synthesis 8-O-methyl transferase TcmO (339 aa).

S-adenosyl-L-methionine is bound by residues D200 and 226-228 (GDF). H246 functions as the Proton acceptor in the catalytic mechanism.

Belongs to the class I-like SAM-binding methyltransferase superfamily. Cation-independent O-methyltransferase family.

Its pathway is antibiotic biosynthesis; tetracenomycin C biosynthesis. The polypeptide is Tetracenomycin polyketide synthesis 8-O-methyl transferase TcmO (tcmO) (Streptomyces glaucescens).